We begin with the raw amino-acid sequence, 476 residues long: Sulfate adenylyltransferase subunit 1 (476 aa).

The 217-residue stretch at 24-240 (KSLLRFLTCG…LENVDIDRDK (217 aa)) folds into the tr-type G domain. A G1 region spans residues 33 to 40 (GSVDDGKS). 33 to 40 (GSVDDGKS) is a binding site for GTP. Residues 91–95 (GITID) form a G2 region. The tract at residues 112-115 (DTPG) is G3. GTP-binding positions include 112–116 (DTPGH) and 167–170 (NKMD). A G4 region spans residues 167–170 (NKMD). The interval 205–207 (SAL) is G5.

This sequence belongs to the TRAFAC class translation factor GTPase superfamily. Classic translation factor GTPase family. CysN/NodQ subfamily. Heterodimer composed of CysD, the smaller subunit, and CysN.

It catalyses the reaction sulfate + ATP + H(+) = adenosine 5'-phosphosulfate + diphosphate. The protein operates within sulfur metabolism; hydrogen sulfide biosynthesis; sulfite from sulfate: step 1/3. In terms of biological role, with CysD forms the ATP sulfurylase (ATPS) that catalyzes the adenylation of sulfate producing adenosine 5'-phosphosulfate (APS) and diphosphate, the first enzymatic step in sulfur assimilation pathway. APS synthesis involves the formation of a high-energy phosphoric-sulfuric acid anhydride bond driven by GTP hydrolysis by CysN coupled to ATP hydrolysis by CysD. The chain is Sulfate adenylyltransferase subunit 1 from Vibrio cholerae serotype O1 (strain ATCC 39541 / Classical Ogawa 395 / O395).